The primary structure comprises 304 residues: MADYHNNYKKNDELEFVRTGYGKDMVKVLHIQRDGKYHSIKEVATSVQLTLSSKKDYLHGDNSDIIPTDTIKNTVHVLAKFKGIKSIEAFGVNICEYFLSSFNHVIRAQVYVEEIPWKRLEKNGVKHVHAFIHTPTGTHFCEVEQLRSGPPVIHSGTKDLKVLKTTQSGFEGFIKDQFTTLPEVKDRCFATQVYCKWRYHQCRDVDFEATWGTIRDLVLEKFAGPYDKGEYSPSVQKTLYDIQVLSLSRVPEIEDMEISLPNIHYFNIDMSKMGLINKEEVLLPLDNPYGKITGTVKRKLSSRL.

At A2 the chain carries N-acetylalanine. An N6-acetyllysine; alternate mark is found at K10 and K23. An N6-succinyllysine; alternate mark is found at K10 and K23. K23 functions as the Charge relay system in the catalytic mechanism. K27 and K36 each carry N6-acetyllysine. S39 and S63 each carry phosphoserine. T68 acts as the Charge relay system in catalysis. Residues T68 and D69 each coordinate urate. N6-acetyllysine is present on residues K118, K122, and K164. A urate-binding site is contributed by F170. Residues K175 and K185 each carry the N6-acetyllysine modification. Residue R187 coordinates urate. 2 positions are modified to N6-acetyllysine; alternate: K221 and K228. Residues K221 and K228 each carry the N6-succinyllysine; alternate modification. S232 is modified (phosphoserine). Urate contacts are provided by V235, Q236, and N262. Residue H264 is the Charge relay system of the active site. N6-acetyllysine is present on K278. At Y289 the chain carries Phosphotyrosine. The Microbody targeting signal signature appears at 302-304 (SRL).

This sequence belongs to the uricase family.

It is found in the peroxisome. It carries out the reaction urate + O2 + H2O = 5-hydroxyisourate + H2O2. The protein operates within purine metabolism; urate degradation; (S)-allantoin from urate: step 1/3. Its function is as follows. Catalyzes the oxidation of uric acid to 5-hydroxyisourate, which is further processed to form (S)-allantoin. The chain is Uricase (UOX) from Macaca mulatta (Rhesus macaque).